Here is a 451-residue protein sequence, read N- to C-terminus: Adenylosuccinate synthetase isozyme 2 (451 aa).

Residues G34–K40 and G62–T64 contribute to the GTP site. D35 (proton acceptor) is an active-site residue. Positions 35 and 62 each coordinate Mg(2+). Position 35 (D35) interacts with substrate. IMP contacts are provided by residues D35–K38, N60–H63, T157, R171, N250, T265, and R329. The Proton donor role is filled by H63. V325 to R331 is a substrate binding site. Residues R331, K357–D359, and G439–K442 contribute to the GTP site.

It belongs to the adenylosuccinate synthetase family. Homodimer. It depends on Mg(2+) as a cofactor.

It localises to the cytoplasm. Its subcellular location is the mitochondrion. The catalysed reaction is IMP + L-aspartate + GTP = N(6)-(1,2-dicarboxyethyl)-AMP + GDP + phosphate + 2 H(+). It functions in the pathway purine metabolism; AMP biosynthesis via de novo pathway; AMP from IMP: step 1/2. With respect to regulation, inhibited competitively by AMP and IMP and non-competitively by fructose 1,6-bisphosphate. In terms of biological role, plays an important role in the de novo pathway and in the salvage pathway of purine nucleotide biosynthesis. Catalyzes the first committed step in the biosynthesis of AMP from IMP. The protein is Adenylosuccinate synthetase isozyme 2 of Gallus gallus (Chicken).